We begin with the raw amino-acid sequence, 508 residues long: Steroid 17-alpha-hydroxylase/17,20 lyase (508 aa).

A substrate-binding site is contributed by N202. C442 provides a ligand contact to heme.

This sequence belongs to the cytochrome P450 family. It depends on heme as a cofactor.

It localises to the endoplasmic reticulum membrane. It is found in the microsome membrane. It carries out the reaction a C21-steroid + reduced [NADPH--hemoprotein reductase] + O2 = a 17alpha-hydroxy-C21-steroid + oxidized [NADPH--hemoprotein reductase] + H2O + H(+). The catalysed reaction is progesterone + reduced [NADPH--hemoprotein reductase] + O2 = 17alpha-hydroxyprogesterone + oxidized [NADPH--hemoprotein reductase] + H2O + H(+). It catalyses the reaction pregnenolone + reduced [NADPH--hemoprotein reductase] + O2 = 17alpha-hydroxypregnenolone + oxidized [NADPH--hemoprotein reductase] + H2O + H(+). The enzyme catalyses 17alpha-hydroxyprogesterone + reduced [NADPH--hemoprotein reductase] + O2 = androst-4-ene-3,17-dione + acetate + oxidized [NADPH--hemoprotein reductase] + H2O + 2 H(+). It carries out the reaction 17alpha-hydroxyprogesterone + reduced [NADPH--hemoprotein reductase] + O2 = 16alpha,17alpha-dihydroxyprogesterone + oxidized [NADPH--hemoprotein reductase] + H2O + H(+). The catalysed reaction is 16alpha,17alpha-dihydroxyprogesterone + reduced [NADPH--hemoprotein reductase] + O2 = 6beta,16alpha,17alpha-trihydroxyprogesterone + oxidized [NADPH--hemoprotein reductase] + H2O + H(+). It catalyses the reaction 17alpha-hydroxypregnenolone + reduced [NADPH--hemoprotein reductase] + O2 = 3beta-hydroxyandrost-5-en-17-one + acetate + oxidized [NADPH--hemoprotein reductase] + H2O + 2 H(+). The enzyme catalyses 16alpha,17alpha-dihydroxypregnenolone + reduced [NADPH--hemoprotein reductase] + O2 = 3beta,16alpha-dihydroxy-androst-5-en-17-one + acetate + oxidized [NADPH--hemoprotein reductase] + H2O + 2 H(+). It carries out the reaction 3beta-hydroxyandrost-5-en-17-one + reduced [NADPH--hemoprotein reductase] + O2 = 3beta,16alpha-dihydroxy-androst-5-en-17-one + oxidized [NADPH--hemoprotein reductase] + H2O + H(+). The catalysed reaction is androst-4-ene-3,17-dione + reduced [NADPH--hemoprotein reductase] + O2 = 16alpha-hydroxyandrost-4-ene-3,17-dione + oxidized [NADPH--hemoprotein reductase] + H2O + H(+). It participates in steroid hormone biosynthesis. The protein operates within steroid biosynthesis; glucocorticoid biosynthesis. Its activity is regulated as follows. Regulated predominantly by intracellular cAMP levels. The 17,20-lyase activity is stimulated by cytochrome b5, which acts as an allosteric effector increasing the Vmax of the lyase activity. A cytochrome P450 monooxygenase involved in corticoid and androgen biosynthesis. Catalyzes 17-alpha hydroxylation of C21 steroids, which is common for both pathways. A second oxidative step, required only for androgen synthesis, involves an acyl-carbon cleavage. The 17-alpha hydroxy intermediates, as part of adrenal glucocorticoids biosynthesis pathway, are precursors of cortisol. Hydroxylates steroid hormones, pregnenolone and progesterone to form 17-alpha hydroxy metabolites, followed by the cleavage of the C17-C20 bond to form C19 steroids, dehydroepiandrosterone (DHEA) and androstenedione. Has 16-alpha hydroxylase activity. Catalyzes 16-alpha hydroxylation of 17-alpha hydroxy pregnenolone, followed by the cleavage of the C17-C20 bond to form 16-alpha-hydroxy DHEA. Also 16-alpha hydroxylates androgens, relevant for estriol synthesis. Mechanistically, uses molecular oxygen inserting one oxygen atom into a substrate, and reducing the second into a water molecule, with two electrons provided by NADPH via cytochrome P450 reductase (CPR; NADPH-ferrihemoprotein reductase). In Felis catus (Cat), this protein is Steroid 17-alpha-hydroxylase/17,20 lyase (CYP17A1).